Here is a 632-residue protein sequence, read N- to C-terminus: tRNA uridine 5-carboxymethylaminomethyl modification enzyme MnmG (632 aa).

Residues 15–20 (GAGHAG), isoleucine 127, and serine 182 each bind FAD. 276-290 (GPRYCPSIEDKIVRF) is a binding site for NAD(+). Position 373 (glutamine 373) interacts with FAD.

The protein belongs to the MnmG family. Homodimer. Heterotetramer of two MnmE and two MnmG subunits. FAD is required as a cofactor.

The protein localises to the cytoplasm. NAD-binding protein involved in the addition of a carboxymethylaminomethyl (cmnm) group at the wobble position (U34) of certain tRNAs, forming tRNA-cmnm(5)s(2)U34. The polypeptide is tRNA uridine 5-carboxymethylaminomethyl modification enzyme MnmG (Streptococcus pyogenes serotype M3 (strain SSI-1)).